The chain runs to 554 residues: Inactive sesquithujene synthase B (554 aa).

D308 and D312 together coordinate Mg(2+). D308, D312, R449, and N452 together coordinate substrate. The DDXXD motif signature appears at 308-312; the sequence is DDMFD. Positions 452, 456, and 460 each coordinate Mg(2+).

Belongs to the terpene synthase family. As to quaternary structure, monomer. Mg(2+) serves as cofactor. It depends on Mn(2+) as a cofactor.

It localises to the cytoplasm. It participates in secondary metabolite biosynthesis; terpenoid biosynthesis. Functionally, non-functional sesquiterpene synthase having less than 1% of the activity found in TPS5A. The polypeptide is Inactive sesquithujene synthase B (Zea mays (Maize)).